The chain runs to 540 residues: MELSRRKMCCYIQFCCFVLIGCFISQICASSDAIFYESFDESFEGSWIVSEKEDYPGEWKHSKSEGHDDYGLLVSDKARKYAIVKELEKPVELKDGTIVLQYEVRLQNGLECGGAYLKYLRPQDAGWTAKGFDNESPYSIMFGPDKCGATNKVHFILKHKNPKSGDYVEHHLKFPPSVPSDKLTHVYTAVIKPDNELVILIDGEEKKKANFLSSEDFEPALIPTKTIPDPDDKKPEDWDERAKIPDPEATKPDDWDEDAPMEILDEEAEKPEGWLDDEPEEIDDPEAVKPEDWDDEEDGEWEAPQIENPKCESAPGCGEWRRPLKRNPAYKGKWHAPLIDNPAYKGIWKPREIPNPDYFELEKPNFEPIAAIGIEDLDQQDGILFDNILIASDEKTAAKSGILLGSRSLRWKKRNRRLKKNQPLLDGLKGIQKAVFDVLYKIADLPFLGDHKVKVLELIEKAETQPNITIGVIVSIIVVIFSILLKLLFGGKKAAPKVNVVPKKKEEPEASNTAEVREGEEEKTEGEVAAAPRRRPRRDT.

A signal peptide spans 1–29 (MELSRRKMCCYIQFCCFVLIGCFISQICA). Residues 30–469 (SSDAIFYESF…EKAETQPNIT (440 aa)) are Lumenal-facing. The Ca(2+) site is built by S38 and D69. Residues C112 and C147 are joined by a disulfide bond. An alpha-D-glucoside-binding residues include Y116, K118, Y138, and D145. The interval 221–301 (LIPTKTIPDP…DWDDEEDGEW (81 aa)) is disordered. The interval 227–360 (IPDPDDKKPE…REIPNPDYFE (134 aa)) is p domain (Extended arm). Over residues 228–253 (PDPDDKKPEDWDERAKIPDPEATKPD) the composition is skewed to basic and acidic residues. A run of 5 repeats spans residues 229 to 240 (DPDDKKPEDWDE), 246 to 257 (DPEATKPDDWDE), 265 to 276 (DEEAEKPEGWLD), 284 to 295 (DPEAVKPEDWDD), and 299 to 309 (GEWEAPQIENP). 4 X approximate repeats stretches follow at residues 229 to 295 (DPDD…DWDD) and 299 to 356 (GEWE…IPNP). Composition is skewed to acidic residues over residues 254–285 (DWDE…IDDP) and 292–301 (DWDDEEDGEW). C311 and C317 are joined by a disulfide. A run of 3 repeats spans residues 318 to 328 (GEWRRPLKRNP), 332 to 342 (GKWHAPLIDNP), and 346 to 356 (GIWKPREIPNP). Position 375 (E375) interacts with an alpha-D-glucoside. D386 is a binding site for Ca(2+). N467 is a glycosylation site (N-linked (GlcNAc...) asparagine). The chain crosses the membrane as a helical span at residues 470–490 (IGVIVSIIVVIFSILLKLLFG). Topologically, residues 491–540 (GKKAAPKVNVVPKKKEEPEASNTAEVREGEEEKTEGEVAAAPRRRPRRDT) are cytoplasmic. Residues 499-540 (NVVPKKKEEPEASNTAEVREGEEEKTEGEVAAAPRRRPRRDT) are disordered.

It belongs to the calreticulin family.

The protein resides in the endoplasmic reticulum membrane. Functionally, calcium-binding protein that interacts with newly synthesized monoglucosylated glycoproteins in the endoplasmic reticulum. It may act in assisting protein assembly and/or in the retention within the ER of unassembled protein subunits. It seems to play a major role in the quality control apparatus of the ER by the retention of incorrectly folded proteins. This Helianthus tuberosus (Jerusalem artichoke) protein is Calnexin homolog.